Here is a 238-residue protein sequence, read N- to C-terminus: Ribonuclease PH (238 aa).

Phosphate is bound by residues Arg-86 and 124–126 (GTR).

It belongs to the RNase PH family. In terms of assembly, homohexameric ring arranged as a trimer of dimers.

It carries out the reaction tRNA(n+1) + phosphate = tRNA(n) + a ribonucleoside 5'-diphosphate. Its function is as follows. Phosphorolytic 3'-5' exoribonuclease that plays an important role in tRNA 3'-end maturation. Removes nucleotide residues following the 3'-CCA terminus of tRNAs; can also add nucleotides to the ends of RNA molecules by using nucleoside diphosphates as substrates, but this may not be physiologically important. Probably plays a role in initiation of 16S rRNA degradation (leading to ribosome degradation) during starvation. The protein is Ribonuclease PH of Salmonella choleraesuis (strain SC-B67).